The chain runs to 183 residues: Capsid protein (183 aa).

Positions 143 to 183 (LPETTVVRRRGRSPRRRTPSPRRRRSQSPRRRRSQSRESQC) are disordered. Over residues 149 to 176 (VRRRGRSPRRRTPSPRRRRSQSPRRRRS) the composition is skewed to basic residues. Phosphoserine; by host is present on residues Ser-155, Ser-162, and Ser-170. A 1; half-length repeat occupies 155 to 161 (SPRRRTP). Residues 155–177 (SPRRRTPSPRRRRSQSPRRRRSQ) are 3 X 8 AA repeats of S-P-R-R-R-[PR]-S-Q. The Bipartite nuclear localization signal signature appears at 158–175 (RRTPSPRRRRSQSPRRRR). 2 repeat units span residues 162–169 (SPRRRRSQ) and 170–177 (SPRRRRSQ). Residues 177-183 (QSRESQC) form an RNA binding region.

Belongs to the orthohepadnavirus core antigen family. In terms of assembly, homodimerizes, then multimerizes. Interacts with cytosol exposed regions of viral L glycoprotein present in the reticulum-to-Golgi compartment. Interacts with human FLNB. Phosphorylated form interacts with host importin alpha; this interaction depends on the exposure of the NLS, which itself depends upon genome maturation and/or phosphorylation of the capsid protein. Interacts with host NUP153. Post-translationally, phosphorylated by host SRPK1, SRPK2, and maybe protein kinase C or GAPDH. Phosphorylation is critical for pregenomic RNA packaging. Protein kinase C phosphorylation is stimulated by HBx protein and may play a role in transport of the viral genome to the nucleus at the late step during the viral replication cycle.

The protein resides in the virion. It localises to the host cytoplasm. Self assembles to form an icosahedral capsid. Most capsids appear to be large particles with an icosahedral symmetry of T=4 and consist of 240 copies of capsid protein, though a fraction forms smaller T=3 particles consisting of 180 capsid proteins. Entering capsids are transported along microtubules to the nucleus. Phosphorylation of the capsid is thought to induce exposure of nuclear localization signal in the C-terminal portion of the capsid protein that allows binding to the nuclear pore complex via the importin (karyopherin-) alpha and beta. Capsids are imported in intact form through the nuclear pore into the nuclear basket, where it probably binds NUP153. Only capsids that contain the mature viral genome can release the viral DNA and capsid protein into the nucleoplasm. Immature capsids get stuck in the basket. Capsids encapsulate the pre-genomic RNA and the P protein. Pre-genomic RNA is reverse-transcribed into DNA while the capsid is still in the cytoplasm. The capsid can then either be directed to the nucleus, providing more genomes for transcription, or bud through the endoplasmic reticulum to provide new virions. The protein is Capsid protein of Homo sapiens (Human).